Consider the following 156-residue polypeptide: Small ribosomal subunit protein uS7 (156 aa).

It belongs to the universal ribosomal protein uS7 family. As to quaternary structure, part of the 30S ribosomal subunit. Contacts proteins S9 and S11.

Its function is as follows. One of the primary rRNA binding proteins, it binds directly to 16S rRNA where it nucleates assembly of the head domain of the 30S subunit. Is located at the subunit interface close to the decoding center, probably blocks exit of the E-site tRNA. The polypeptide is Small ribosomal subunit protein uS7 (Clostridium botulinum (strain 657 / Type Ba4)).